Reading from the N-terminus, the 424-residue chain is Glutamate-1-semialdehyde 2,1-aminomutase (424 aa).

Residue lysine 258 is modified to N6-(pyridoxal phosphate)lysine.

Belongs to the class-III pyridoxal-phosphate-dependent aminotransferase family. HemL subfamily. Requires pyridoxal 5'-phosphate as cofactor.

Its subcellular location is the cytoplasm. The catalysed reaction is (S)-4-amino-5-oxopentanoate = 5-aminolevulinate. It participates in porphyrin-containing compound metabolism; protoporphyrin-IX biosynthesis; 5-aminolevulinate from L-glutamyl-tRNA(Glu): step 2/2. This Pyrobaculum islandicum (strain DSM 4184 / JCM 9189 / GEO3) protein is Glutamate-1-semialdehyde 2,1-aminomutase.